Consider the following 428-residue polypeptide: AP2-like ethylene-responsive transcription factor At2g41710 (428 aa).

Positions 1–10 (MASVSSSDQG) are enriched in polar residues. The interval 1 to 28 (MASVSSSDQGPKTEAGCSGGGGGESSET) is disordered. Positions 70-136 (IYRGVTRHRW…WGPGTLINFP (67 aa)) form a DNA-binding region, AP2/ERF.

Belongs to the AP2/ERF transcription factor family. AP2 subfamily.

The protein localises to the nucleus. In terms of biological role, probably acts as a transcriptional activator. Binds to the GCC-box pathogenesis-related promoter element. May be involved in the regulation of gene expression by stress factors and by components of stress signal transduction pathways. This chain is AP2-like ethylene-responsive transcription factor At2g41710, found in Arabidopsis thaliana (Mouse-ear cress).